A 32-amino-acid chain; its full sequence is Acetolactate synthase, catabolic (32 aa).

The protein belongs to the TPP enzyme family. In terms of assembly, homodimer.

The enzyme catalyses 2 pyruvate + H(+) = (2S)-2-acetolactate + CO2. The protein operates within polyol metabolism; (R,R)-butane-2,3-diol biosynthesis; (R,R)-butane-2,3-diol from pyruvate: step 1/3. In Klebsiella aerogenes (Enterobacter aerogenes), this protein is Acetolactate synthase, catabolic (budB).